We begin with the raw amino-acid sequence, 326 residues long: Delta-aminolevulinic acid dehydratase (326 aa).

The Zn(2+) site is built by C119, C121, and C129. K198 functions as the Schiff-base intermediate with substrate in the catalytic mechanism. The 5-aminolevulinate site is built by R208 and R220. A Mg(2+)-binding site is contributed by E236. The active-site Schiff-base intermediate with substrate is the K251. S277 and Y316 together coordinate 5-aminolevulinate.

The protein belongs to the ALAD family. As to quaternary structure, homooctamer. The cofactor is Zn(2+).

It carries out the reaction 2 5-aminolevulinate = porphobilinogen + 2 H2O + H(+). It participates in porphyrin-containing compound metabolism; protoporphyrin-IX biosynthesis; coproporphyrinogen-III from 5-aminolevulinate: step 1/4. Functionally, catalyzes an early step in the biosynthesis of tetrapyrroles. Binds two molecules of 5-aminolevulinate per subunit, each at a distinct site, and catalyzes their condensation to form porphobilinogen. This Synechococcus elongatus (strain ATCC 33912 / PCC 7942 / FACHB-805) (Anacystis nidulans R2) protein is Delta-aminolevulinic acid dehydratase (hemB).